The sequence spans 234 residues: Large ribosomal subunit protein uL1 (234 aa).

Belongs to the universal ribosomal protein uL1 family. Part of the 50S ribosomal subunit.

Its function is as follows. Binds directly to 23S rRNA. The L1 stalk is quite mobile in the ribosome, and is involved in E site tRNA release. In terms of biological role, protein L1 is also a translational repressor protein, it controls the translation of the L11 operon by binding to its mRNA. The polypeptide is Large ribosomal subunit protein uL1 (Helicobacter pylori (strain G27)).